The sequence spans 298 residues: Aspartate carbamoyltransferase catalytic subunit (298 aa).

Positions 54 and 55 each coordinate carbamoyl phosphate. Residue Lys-82 participates in L-aspartate binding. Carbamoyl phosphate contacts are provided by Arg-104, His-132, and Gln-135. Residues Arg-165 and Arg-218 each coordinate L-aspartate. Residues Gly-260 and Pro-261 each contribute to the carbamoyl phosphate site.

It belongs to the aspartate/ornithine carbamoyltransferase superfamily. ATCase family. As to quaternary structure, heterododecamer (2C3:3R2) of six catalytic PyrB chains organized as two trimers (C3), and six regulatory PyrI chains organized as three dimers (R2).

The catalysed reaction is carbamoyl phosphate + L-aspartate = N-carbamoyl-L-aspartate + phosphate + H(+). Its pathway is pyrimidine metabolism; UMP biosynthesis via de novo pathway; (S)-dihydroorotate from bicarbonate: step 2/3. In terms of biological role, catalyzes the condensation of carbamoyl phosphate and aspartate to form carbamoyl aspartate and inorganic phosphate, the committed step in the de novo pyrimidine nucleotide biosynthesis pathway. This chain is Aspartate carbamoyltransferase catalytic subunit, found in Wolbachia sp. subsp. Brugia malayi (strain TRS).